Reading from the N-terminus, the 203-residue chain is GTP-binding protein ypt1 (203 aa).

Residues 15–23 (GDSGVGKSC), 33–40 (YTESYIST), 63–67 (DTAGQ), 121–124 (NKSD), and 151–153 (SAK) contribute to the GTP site. The Effector region motif lies at 37 to 45 (YISTIGVDF). A Phosphothreonine modification is found at Thr-164. S-geranylgeranyl cysteine attachment occurs at residues Cys-202 and Cys-203.

The protein belongs to the small GTPase superfamily. Rab family.

The protein localises to the endoplasmic reticulum membrane. The protein resides in the golgi apparatus membrane. Its subcellular location is the cytoplasm. It localises to the preautophagosomal structure membrane. With respect to regulation, rab activation is generally mediated by a guanine exchange factor (GEF), while inactivation through hydrolysis of bound GTP is catalyzed by a GTPase activating protein (GAP). Functionally, the small GTPases Rab are key regulators of intracellular membrane trafficking, from the formation of transport vesicles to their fusion with membranes. Rabs cycle between an inactive GDP-bound form and an active GTP-bound form that is able to recruit to membranes different set of downstream effectors directly responsible for vesicle formation, movement, tethering and fusion. Ypt1 regulates the trafficking of secretory vesicles from the endoplasmic reticulum (ER) to the Golgi. Plays a role in the initial events of the autophagic vacuole development which take place at specialized regions of the endoplasmic reticulum. Also involved in the recycling of membrane proteins. The polypeptide is GTP-binding protein ypt1 (ypt1) (Schizosaccharomyces pombe (strain 972 / ATCC 24843) (Fission yeast)).